The primary structure comprises 437 residues: O-methyltransferase 3 (437 aa).

The interval 1-21 (MNNKTSNGDITNDEPTVGSKR) is disordered. Positions 146 to 180 (SDNLYQDKDDLEKQEKEREKKMANLLSKNVDIKEL) form a coiled coil. The interval 408-437 (DPINNNNNNNNNNNNNNNNTTTTTSTTTTN) is disordered. The segment covering 411–437 (NNNNNNNNNNNNNNNNTTTTTSTTTTN) has biased composition (low complexity).

It belongs to the methyltransferase superfamily. METL family.

Functionally, probable methyltransferase. The polypeptide is O-methyltransferase 3 (omt3) (Dictyostelium discoideum (Social amoeba)).